Here is a 107-residue protein sequence, read N- to C-terminus: UPF0102 protein Tlet_0667 (107 aa).

The protein belongs to the UPF0102 family.

This chain is UPF0102 protein Tlet_0667, found in Pseudothermotoga lettingae (strain ATCC BAA-301 / DSM 14385 / NBRC 107922 / TMO) (Thermotoga lettingae).